The chain runs to 401 residues: Probable tRNA sulfurtransferase (401 aa).

A THUMP domain is found at 60–165 (EEICSLLKNI…EEATFLTIRN (106 aa)). Residues 183 to 184 (ML), 208 to 209 (HF), R265, G287, and Q296 each bind ATP.

Belongs to the ThiI family.

The protein resides in the cytoplasm. It carries out the reaction [ThiI sulfur-carrier protein]-S-sulfanyl-L-cysteine + a uridine in tRNA + 2 reduced [2Fe-2S]-[ferredoxin] + ATP + H(+) = [ThiI sulfur-carrier protein]-L-cysteine + a 4-thiouridine in tRNA + 2 oxidized [2Fe-2S]-[ferredoxin] + AMP + diphosphate. The catalysed reaction is [ThiS sulfur-carrier protein]-C-terminal Gly-Gly-AMP + S-sulfanyl-L-cysteinyl-[cysteine desulfurase] + AH2 = [ThiS sulfur-carrier protein]-C-terminal-Gly-aminoethanethioate + L-cysteinyl-[cysteine desulfurase] + A + AMP + 2 H(+). It functions in the pathway cofactor biosynthesis; thiamine diphosphate biosynthesis. Its function is as follows. Catalyzes the ATP-dependent transfer of a sulfur to tRNA to produce 4-thiouridine in position 8 of tRNAs, which functions as a near-UV photosensor. Also catalyzes the transfer of sulfur to the sulfur carrier protein ThiS, forming ThiS-thiocarboxylate. This is a step in the synthesis of thiazole, in the thiamine biosynthesis pathway. The sulfur is donated as persulfide by IscS. This is Probable tRNA sulfurtransferase from Bacillus velezensis (strain DSM 23117 / BGSC 10A6 / LMG 26770 / FZB42) (Bacillus amyloliquefaciens subsp. plantarum).